The chain runs to 76 residues: Candidate secreted effector protein MPL124497 (76 aa).

The N-terminal stretch at 1 to 21 is a signal peptide; that stretch reads MKLIIFAAISVAFMSFDQVLG.

The protein belongs to the CPGH1 family.

It is found in the secreted. It localises to the host cell. Its subcellular location is the host cytoplasm. The protein resides in the host nucleus. Rust effector delivered into infected tissues to modulate host functions and contribute to pathogen virulence. Enhances leaf colonization by the bacteria Pseudomonas syringae and the oomycete Hyaloperonospora arabidopsidis pathogens in an Arabidopsis thaliana infection model. The sequence is that of Candidate secreted effector protein MPL124497 from Melampsora larici-populina (strain 98AG31 / pathotype 3-4-7) (Poplar leaf rust fungus).